Consider the following 86-residue polypeptide: Small ribosomal subunit protein bS20 (86 aa).

The tract at residues 1 to 27 (MANNKSAKKRAIQAEKRRQHNASRRSM) is disordered.

Belongs to the bacterial ribosomal protein bS20 family.

In terms of biological role, binds directly to 16S ribosomal RNA. This Vibrio vulnificus (strain CMCP6) protein is Small ribosomal subunit protein bS20.